Consider the following 347-residue polypeptide: Adenine deaminase (347 aa).

3 residues coordinate Zn(2+): histidine 16, histidine 18, and histidine 204. Glutamate 207 serves as the catalytic Proton donor. Aspartate 285 contributes to the Zn(2+) binding site. Aspartate 286 is a binding site for substrate.

It belongs to the metallo-dependent hydrolases superfamily. Adenosine and AMP deaminases family. Adenine deaminase type 2 subfamily. Requires Zn(2+) as cofactor. Probably ubiquitinated when cells enter quiescence in response to nutrient limitation, since it is specifically degraded via a process requiring the F-box protein SAF1 and components of the SKP1-Cullin-F-box complex.

The protein resides in the cytoplasm. It is found in the nucleus. It catalyses the reaction adenine + H2O + H(+) = hypoxanthine + NH4(+). Catalyzes the hydrolytic deamination of adenine to hypoxanthine. Plays an important role in the purine salvage pathway and in nitrogen catabolism. Also exhibits a low activity towards N(6)-substituted adenines that are commonly known as the plant hormones cytokinins. This Saccharomyces cerevisiae (strain ATCC 204508 / S288c) (Baker's yeast) protein is Adenine deaminase.